A 145-amino-acid polypeptide reads, in one-letter code: MSENNENDGFNLDPDVKEELEETKSEEDIIGMYQTDGSNSEKVPVLKSWLPDSDKWQAKTVVNEREARLMAVARNLTEAYDEIEHMQPFIEGLITDLEMYKTSVDGMAREQQKSVLMAMFGRSSEAQESQSMLMSMIAGKQDNDD.

Residues 1–25 are disordered; the sequence is MSENNENDGFNLDPDVKEELEETKS. Over residues 14–25 the composition is skewed to basic and acidic residues; sequence PDVKEELEETKS.

This is an uncharacterized protein from His1 virus (isolate Australia/Victoria) (His1V).